The primary structure comprises 150 residues: uncharacterized protein (150 aa).

Residues 1-133 (MNDILREIGM…ISALLHRVRK (133 aa)) enclose the HTH marR-type domain. Residues 47 to 70 (QEKLAEMIKVDRTTAARAIKKLEM) constitute a DNA-binding region (H-T-H motif).

This is an uncharacterized protein from Bacillus subtilis (strain 168).